Reading from the N-terminus, the 328-residue chain is HTH-type transcriptional regulator MalR (328 aa).

Residues 2 to 57 form the HTH lacI-type domain; the sequence is PVTIKDVAKAAGVSPSTVTRVIQNKSTISDETKKRVRKAMKELNYHPNLNARSLVS. Positions 5 to 24 form a DNA-binding region, H-T-H motif; sequence IKDVAKAAGVSPSTVTRVIQ. Positions 173-218 are inducer binding; it reads TEYFIKKGCKRIAFIGGSKKLFVTKDRLTGYEQALKHYKLTTDNNR. The tract at residues 282 to 291 is dimerization; that stretch reads NLAAYVDINS.

Functionally, transcriptional repressor of the maltosaccharide utilization operons malxCD and malMP. This chain is HTH-type transcriptional regulator MalR (malR), found in Streptococcus pneumoniae serotype 4 (strain ATCC BAA-334 / TIGR4).